A 185-amino-acid chain; its full sequence is GTP cyclohydrolase 1 (185 aa).

Residues C75, H78, and C146 each contribute to the Zn(2+) site.

Belongs to the GTP cyclohydrolase I family. As to quaternary structure, homomer.

It catalyses the reaction GTP + H2O = 7,8-dihydroneopterin 3'-triphosphate + formate + H(+). It participates in cofactor biosynthesis; 7,8-dihydroneopterin triphosphate biosynthesis; 7,8-dihydroneopterin triphosphate from GTP: step 1/1. In Clostridium kluyveri (strain NBRC 12016), this protein is GTP cyclohydrolase 1.